Reading from the N-terminus, the 279-residue chain is NADPH-dependent 7-cyano-7-deazaguanine reductase (279 aa).

Substrate is bound at residue 86-88 (IES). 88-89 (SK) provides a ligand contact to NADPH. Residue Cys186 is the Thioimide intermediate of the active site. Asp193 (proton donor) is an active-site residue. 225–226 (HE) provides a ligand contact to substrate. 254 to 255 (RG) contacts NADPH.

The protein belongs to the GTP cyclohydrolase I family. QueF type 2 subfamily. Homodimer.

It is found in the cytoplasm. The enzyme catalyses 7-aminomethyl-7-carbaguanine + 2 NADP(+) = 7-cyano-7-deazaguanine + 2 NADPH + 3 H(+). It participates in tRNA modification; tRNA-queuosine biosynthesis. Catalyzes the NADPH-dependent reduction of 7-cyano-7-deazaguanine (preQ0) to 7-aminomethyl-7-deazaguanine (preQ1). The protein is NADPH-dependent 7-cyano-7-deazaguanine reductase of Chromobacterium violaceum (strain ATCC 12472 / DSM 30191 / JCM 1249 / CCUG 213 / NBRC 12614 / NCIMB 9131 / NCTC 9757 / MK).